We begin with the raw amino-acid sequence, 338 residues long: MTVGDGDDIHAVGGSVRHIPVLLGEVLEALAPAERDIIIDGTFGAGGYTRAILATGASVVAIDRDPDAIAAGRDLEVQSGGRLRLVQAPFSTLDEHVESADGVVLDIGVSSMQLDQAERGFSFRFDGPLDMRMAQAGLSAADVVNSFKPGDLARIFGFLGEERHAGRIARMIEARREKKPFEGTLELADAIETHIGRAPKDKIHPATRVFQALRIYVNDELGELAKALFAAERALKPGGRLVVVTFHSLEDRIVKRFIADRADVATGSRHLPEAQARTATFRKAGGGVTAGDAEVAANPRARSARLRAAIRTEAPARAGDFSIFGLPKLPGIDRPGER.

S-adenosyl-L-methionine is bound by residues 46 to 48 (GGY), D63, F90, D106, and Q113.

Belongs to the methyltransferase superfamily. RsmH family.

The protein localises to the cytoplasm. It catalyses the reaction cytidine(1402) in 16S rRNA + S-adenosyl-L-methionine = N(4)-methylcytidine(1402) in 16S rRNA + S-adenosyl-L-homocysteine + H(+). Functionally, specifically methylates the N4 position of cytidine in position 1402 (C1402) of 16S rRNA. In Mesorhizobium japonicum (strain LMG 29417 / CECT 9101 / MAFF 303099) (Mesorhizobium loti (strain MAFF 303099)), this protein is Ribosomal RNA small subunit methyltransferase H.